The sequence spans 109 residues: Putative transporter-like protein YIL171W (109 aa).

Over residues 1-22 (MSGVNNTSANDLSTTESNSNSA) the composition is skewed to polar residues. Residues 1-40 (MSGVNNTSANDLSTTESNSNSAVGAPSVKTEHGDSKDSLN) form a disordered region. Topologically, residues 1 to 56 (MSGVNNTSANDLSTTESNSNSAVGAPSVKTEHGDSKDSLNLDATEAPIDLPQKPLS) are cytoplasmic. The segment covering 29–39 (KTEHGDSKDSL) has biased composition (basic and acidic residues). A helical membrane pass occupies residues 57–77 (AYTTVAILCLMIAFGGFIFGW). Topologically, residues 78–109 (DTGTISGFVNLSDFIRRFGQKKTTRGLTTYRK) are extracellular. Residue N87 is glycosylated (N-linked (GlcNAc...) asparagine).

This sequence belongs to the major facilitator superfamily. Sugar transporter (TC 2.A.1.1) family.

It is found in the cell membrane. In terms of biological role, probable glucose transporter. The sequence is that of Putative transporter-like protein YIL171W from Saccharomyces cerevisiae (strain ATCC 204508 / S288c) (Baker's yeast).